The following is a 193-amino-acid chain: Imidazoleglycerol-phosphate dehydratase (193 aa).

This sequence belongs to the imidazoleglycerol-phosphate dehydratase family.

It is found in the cytoplasm. The enzyme catalyses D-erythro-1-(imidazol-4-yl)glycerol 3-phosphate = 3-(imidazol-4-yl)-2-oxopropyl phosphate + H2O. It functions in the pathway amino-acid biosynthesis; L-histidine biosynthesis; L-histidine from 5-phospho-alpha-D-ribose 1-diphosphate: step 6/9. The polypeptide is Imidazoleglycerol-phosphate dehydratase (hisB) (Saccharolobus solfataricus (strain ATCC 35092 / DSM 1617 / JCM 11322 / P2) (Sulfolobus solfataricus)).